The chain runs to 497 residues: RNA-splicing ligase RtcB homolog (497 aa).

Positions 111, 114, 219, 251, and 345 each coordinate Mn(2+). Position 218 to 222 (218 to 222) interacts with GMP; the sequence is NHYAE. GMP is bound by residues 345–346, 394–397, Ser401, 420–423, and Lys496; these read HN, GGTM, and HGAG. His420 acts as the GMP-histidine intermediate in catalysis.

Belongs to the RtcB family. Catalytic component of the tRNA-splicing ligase complex. It depends on Mn(2+) as a cofactor.

It carries out the reaction a 3'-end 3'-phospho-ribonucleotide-RNA + a 5'-end dephospho-ribonucleoside-RNA + GTP = a ribonucleotidyl-ribonucleotide-RNA + GMP + diphosphate. The enzyme catalyses a 3'-end 2',3'-cyclophospho-ribonucleotide-RNA + a 5'-end dephospho-ribonucleoside-RNA + GTP + H2O = a ribonucleotidyl-ribonucleotide-RNA + GMP + diphosphate + H(+). Catalytic subunit of the tRNA-splicing ligase complex that acts by directly joining spliced tRNA halves to mature-sized tRNAs by incorporating the precursor-derived splice junction phosphate into the mature tRNA as a canonical 3',5'-phosphodiester. May act as an RNA ligase with broad substrate specificity, and may function toward other RNAs. The sequence is that of RNA-splicing ligase RtcB homolog from Monosiga brevicollis (Choanoflagellate).